Reading from the N-terminus, the 515-residue chain is MATTLNPSEISELIKTRIEQVKLSAESRNEGTVTSVSDGIVRIFGLADAMQGEMIELPNKTYALALNLERDSVGAVILGDYKHLREGDVAKTTGRILEVPVGKSLLGRVVNALGEPIDGKGTLGPTQTAPVERVAPGVIWRKSVDQPVQTGYKSVDAMIPIGRGQRELIIGDRQTGKTAMAIDTVISQKDTGIKCVYVAIGQKASTIANIVRKLEENDALDHTIVVAATASESAALQYISAYAGCTMGEYFMDRGEDALIIYDDLSKQAVAYRQISLLLKRPPGREAYPGDVFYLHSRLLERAARVSEEYVEKFTQGEVKGKTGSLTALPIIETQAGDVSAFVPTNVISITDGQIFLETDLFNAGIRPAVNAGISVSRVGGSAQTKIIKKLSGGIRISLAQYRELAAFAQFASDLDETTRKQLERGQRVTELMKQKQYTSMSVANQALSIYAVNEGYLDDIPVDKVLTFEEGLHAHFSNTQGALIDKINNSGDWDNNIEAAFKQHIEEFKTTGSW.

171–178 (GDRQTGKT) contacts ATP.

This sequence belongs to the ATPase alpha/beta chains family. As to quaternary structure, F-type ATPases have 2 components, CF(1) - the catalytic core - and CF(0) - the membrane proton channel. CF(1) has five subunits: alpha(3), beta(3), gamma(1), delta(1), epsilon(1). CF(0) has three main subunits: a(1), b(2) and c(9-12). The alpha and beta chains form an alternating ring which encloses part of the gamma chain. CF(1) is attached to CF(0) by a central stalk formed by the gamma and epsilon chains, while a peripheral stalk is formed by the delta and b chains.

The protein resides in the cell inner membrane. It carries out the reaction ATP + H2O + 4 H(+)(in) = ADP + phosphate + 5 H(+)(out). Its function is as follows. Produces ATP from ADP in the presence of a proton gradient across the membrane. The alpha chain is a regulatory subunit. The polypeptide is ATP synthase subunit alpha (Xylella fastidiosa (strain M12)).